Here is a 269-residue protein sequence, read N- to C-terminus: Small ribosomal subunit protein uS3 (269 aa).

In terms of domain architecture, KH type-2 spans 38-106 (IREWLHKNLE…QIQLNILEVK (69 aa)). The interval 215-269 (AQKAARQAAQGGRGGRGGNRRGRGDRPDRRGGRRRAEAAKQSAETPAPQTENAGA) is disordered. A compositionally biased stretch (basic and acidic residues) spans 236-252 (GRGDRPDRRGGRRRAEA). Residues 256–269 (SAETPAPQTENAGA) show a composition bias toward polar residues.

This sequence belongs to the universal ribosomal protein uS3 family. In terms of assembly, part of the 30S ribosomal subunit. Forms a tight complex with proteins S10 and S14.

Binds the lower part of the 30S subunit head. Binds mRNA in the 70S ribosome, positioning it for translation. The chain is Small ribosomal subunit protein uS3 from Cutibacterium acnes (strain DSM 16379 / KPA171202) (Propionibacterium acnes).